Here is a 362-residue protein sequence, read N- to C-terminus: Chorismate synthase (362 aa).

NADP(+) is bound by residues R48 and R54. FMN contacts are provided by residues 125–127, 238–239, G278, 293–297, and R319; these read RSS, NA, and KPTSS.

This sequence belongs to the chorismate synthase family. Homotetramer. It depends on FMNH2 as a cofactor.

The enzyme catalyses 5-O-(1-carboxyvinyl)-3-phosphoshikimate = chorismate + phosphate. It functions in the pathway metabolic intermediate biosynthesis; chorismate biosynthesis; chorismate from D-erythrose 4-phosphate and phosphoenolpyruvate: step 7/7. Its function is as follows. Catalyzes the anti-1,4-elimination of the C-3 phosphate and the C-6 proR hydrogen from 5-enolpyruvylshikimate-3-phosphate (EPSP) to yield chorismate, which is the branch point compound that serves as the starting substrate for the three terminal pathways of aromatic amino acid biosynthesis. This reaction introduces a second double bond into the aromatic ring system. The sequence is that of Chorismate synthase from Tolumonas auensis (strain DSM 9187 / NBRC 110442 / TA 4).